The primary structure comprises 239 residues: Pyridoxine 5'-phosphate synthase (239 aa).

3-amino-2-oxopropyl phosphate is bound at residue asparagine 7. 9 to 10 contributes to the 1-deoxy-D-xylulose 5-phosphate binding site; sequence DH. Arginine 18 provides a ligand contact to 3-amino-2-oxopropyl phosphate. The Proton acceptor role is filled by histidine 43. 2 residues coordinate 1-deoxy-D-xylulose 5-phosphate: arginine 45 and histidine 50. Glutamate 70 acts as the Proton acceptor in catalysis. 1-deoxy-D-xylulose 5-phosphate is bound at residue threonine 100. Residue histidine 191 is the Proton donor of the active site. Residues glycine 192 and 213–214 contribute to the 3-amino-2-oxopropyl phosphate site; that span reads GH.

It belongs to the PNP synthase family. In terms of assembly, homooctamer; tetramer of dimers.

Its subcellular location is the cytoplasm. It carries out the reaction 3-amino-2-oxopropyl phosphate + 1-deoxy-D-xylulose 5-phosphate = pyridoxine 5'-phosphate + phosphate + 2 H2O + H(+). It participates in cofactor biosynthesis; pyridoxine 5'-phosphate biosynthesis; pyridoxine 5'-phosphate from D-erythrose 4-phosphate: step 5/5. Catalyzes the complicated ring closure reaction between the two acyclic compounds 1-deoxy-D-xylulose-5-phosphate (DXP) and 3-amino-2-oxopropyl phosphate (1-amino-acetone-3-phosphate or AAP) to form pyridoxine 5'-phosphate (PNP) and inorganic phosphate. This Geotalea daltonii (strain DSM 22248 / JCM 15807 / FRC-32) (Geobacter daltonii) protein is Pyridoxine 5'-phosphate synthase.